A 140-amino-acid polypeptide reads, in one-letter code: Pro-vaccinia growth factor (140 aa).

Residues 1-18 (MSMKYLMLLFAAMIIRSF) form the signal peptide. The Extracellular portion of the chain corresponds to 19–100 (ADSGNAIETT…SENPNTTTSY (82 aa)). Residue Asn34 is glycosylated (N-linked (GlcNAc...) asparagine; by host). In terms of domain architecture, EGF-like spans 41 to 81 (AIRLCGPEGDGYCLHGDCIHARDIDGMYCRCSHGYTGIRCQ). Disulfide bonds link Cys45–Cys58, Cys53–Cys69, and Cys71–Cys80. Asn95 carries an N-linked (GlcNAc...) asparagine; by host glycan. A helical transmembrane segment spans residues 101–121 (IPSPGIVLVLVGIIIITCCSL). Residues 122–140 (SVYRFTRRTKLPIQDMVVP) lie on the Cytoplasmic side of the membrane.

It belongs to the orthopoxvirus OPG019 family. Vaccinia growth factor interacts with host EGFR and promotes EGFR dimerization.

It is found in the host membrane. The protein localises to the secreted. Functionally, stimulates cellular proliferation (hyperplasia)and mobility around infected cells to promote rapid and efficient spread of infection. This effect is beneficial for virus replication in vivo, because poxviruses replicate possibly better in proliferating cells than in quiescent cells. Acts by binding host EGFR, inducing its dimerization, autophosphorylation and leading to activation of several cellular pathways regulating cell proliferation or cell survival. The activation by host EGFR of mitogen activated protein kinases (MAPK) and extracellular-signal regulated kinases (ERK) are essential for the positive effect of vaccinia growth factor on poxvirus virulence in vivo. This Vaccinia virus (strain L-IVP) (VACV) protein is Pro-vaccinia growth factor (OPG019).